Consider the following 348-residue polypeptide: MFSSVMVALVSLAVAVSANPGLSLKVSGPEAVDGVNNLKVVTTITNTGDETLKLLNDPRGALHTMPTDTFAITNESGETPSFIGVKVKYVPSMAAKSTGENVFAVIAPGQSVNVEHDLSAAYNFTSSGAGTYALEALNVFNYIDPETNEPVEIWADAEAHTTAVSGKLAVVRATPTLTRPVTYNGCSSSEQSALAAAASAAQSYVAESLSYLQTHTAATPRYTTWFGSYISSRHSTVLQHYTDMNSNDFSSYSFDCTCTAAGTFAYVYPNRFGTVYLCGAFWKAPTTGTDSQAGTLVHESSHFTRNGGTKDYAYGQAAAKSLATMDPDKAVMNADNHEYFSENNPAQS.

Positions 1–18 are cleaved as a signal peptide; the sequence is MFSSVMVALVSLAVAVSA. Positions 19-181 are excised as a propeptide; it reads NPGLSLKVSG…RATPTLTRPV (163 aa). Disulfide bonds link C186/C256 and C258/C278. T223 carries an O-linked (Man) threonine; partial glycan. Residue H298 coordinates Zn(2+). Residue E299 is part of the active site. The Zn(2+) site is built by H302 and D311.

It depends on Zn(2+) as a cofactor.

Its subcellular location is the secreted. It carries out the reaction Preferential cleavage in proteins: -Xaa-|-Lys- (in which Xaa may be Pro).. Inhibited by chelating agents such as EDTA and 1,10-phenanthroline. In Grifola frondosa (Maitake), this protein is Peptidyl-Lys metalloendopeptidase (MEP).